Reading from the N-terminus, the 452-residue chain is Pup--protein ligase (452 aa).

Position 9 (E9) interacts with Mg(2+). An ATP-binding site is contributed by R53. Residue Y55 participates in Mg(2+) binding. D57 serves as the catalytic Proton acceptor. E63 contributes to the Mg(2+) binding site. ATP-binding residues include T66 and W419.

It belongs to the Pup ligase/Pup deamidase family. Pup-conjugating enzyme subfamily.

It catalyses the reaction ATP + [prokaryotic ubiquitin-like protein]-L-glutamate + [protein]-L-lysine = ADP + phosphate + N(6)-([prokaryotic ubiquitin-like protein]-gamma-L-glutamyl)-[protein]-L-lysine.. It functions in the pathway protein degradation; proteasomal Pup-dependent pathway. The protein operates within protein modification; protein pupylation. Functionally, catalyzes the covalent attachment of the prokaryotic ubiquitin-like protein modifier Pup to the proteasomal substrate proteins, thereby targeting them for proteasomal degradation. This tagging system is termed pupylation. The ligation reaction involves the side-chain carboxylate of the C-terminal glutamate of Pup and the side-chain amino group of a substrate lysine. This Frankia alni (strain DSM 45986 / CECT 9034 / ACN14a) protein is Pup--protein ligase.